Reading from the N-terminus, the 661-residue chain is UvrABC system protein C (661 aa).

In terms of domain architecture, GIY-YIG spans 52–130 (HKPGVYRMVD…IKRLHPRFNV (79 aa)). A UVR domain is found at 240–275 (QSIKNDMVQAMHKAAKNFDFEQAAAYRDRLSALSHI).

Belongs to the UvrC family. In terms of assembly, interacts with UvrB in an incision complex.

The protein resides in the cytoplasm. Its function is as follows. The UvrABC repair system catalyzes the recognition and processing of DNA lesions. UvrC both incises the 5' and 3' sides of the lesion. The N-terminal half is responsible for the 3' incision and the C-terminal half is responsible for the 5' incision. In Bartonella henselae (strain ATCC 49882 / DSM 28221 / CCUG 30454 / Houston 1) (Rochalimaea henselae), this protein is UvrABC system protein C.